A 487-amino-acid chain; its full sequence is MKAQPKASHFIDGEYVEDTDGTVIESLYPATGEVIARLHAATPAIVERAIAAAKRAQPEWAAMSPMARGRILKRAADIMRERNRVLSELETLDTGKPIQETVVADPTSGADAFEFFGGIAPAGLNGSHIPLGQDFAYTKRVPLGVCVGIGAWNYPQQIACWKAAPALVCGNAMVFKPSENTPLGALKIAEILHEAGLPKGLFNVIQGDRDTGPLLVNHPDVAKVSLTGSVPTGRRVAAAAAGNLKHVTMELGGKSPLVVFDDADLDSAVGGAMLGNFYSTGQVCSNGTRVFVQKTIKDEFLKRLKVRTEAMLIGDPMDEATQVGPMVSWAQREKVISYIEKGKAEGATLIAGGGIPNNVSGEGYYVQPTVFADVTDDMTIAREEIFGPVMCVLDFDAEDEVIARANASEFGLSGGVFTADLTRAHRVVDRLEAGTLWINTYNLCPVEIPFGGSKQSGFGRENSLAALEHYSELKTVYVGMGPVVAPY.

Positions 26 and 93 each coordinate K(+). Gly-150–Trp-152 contributes to the NAD(+) binding site. Lys-162 serves as the catalytic Charge relay system. NAD(+) is bound by residues Lys-176–Glu-179 and Ser-229–Thr-232. K(+) is bound at residue Leu-244. Glu-250 (proton acceptor) is an active-site residue. Residues Gly-252, Cys-284, and Glu-384 each contribute to the NAD(+) site. Residue Cys-284 is the Nucleophile of the active site. Residue Cys-284 is modified to Cysteine sulfenic acid (-SOH). 2 residues coordinate K(+): Lys-454 and Gly-457. The active-site Charge relay system is Glu-461.

Belongs to the aldehyde dehydrogenase family. Dimer of dimers. Requires K(+) as cofactor.

It catalyses the reaction betaine aldehyde + NAD(+) + H2O = glycine betaine + NADH + 2 H(+). Its pathway is amine and polyamine biosynthesis; betaine biosynthesis via choline pathway; betaine from betaine aldehyde: step 1/1. Involved in the biosynthesis of the osmoprotectant glycine betaine. Catalyzes the irreversible oxidation of betaine aldehyde to the corresponding acid. In Rhizobium johnstonii (strain DSM 114642 / LMG 32736 / 3841) (Rhizobium leguminosarum bv. viciae), this protein is Betaine aldehyde dehydrogenase.